We begin with the raw amino-acid sequence, 113 residues long: Integration host factor subunit alpha (113 aa).

Residues 87–113 are disordered; sequence NALNGEVSDETTEGADDDDDEEGEGDE. Positions 93–113 are enriched in acidic residues; sequence VSDETTEGADDDDDEEGEGDE.

Belongs to the bacterial histone-like protein family. As to quaternary structure, heterodimer of an alpha and a beta chain.

This protein is one of the two subunits of integration host factor, a specific DNA-binding protein that functions in genetic recombination as well as in transcriptional and translational control. This chain is Integration host factor subunit alpha, found in Anaeromyxobacter dehalogenans (strain 2CP-1 / ATCC BAA-258).